The sequence spans 81 residues: Bursicon (81 aa).

Heterodimer of burs and pburs. In terms of tissue distribution, central nervous system. Coexpressed with CCAP in most CCAP-specific neurons. Coexpressed with pburs in the large bilateral lateral neurosecretory neurons of the first three unfused abdominal ganglia and in all anterior bilateral cell pairs in the thoracic ganglia.

Its subcellular location is the secreted. Final heterodimeric neurohormone released at the end of the molting cycle, involved in the sclerotization (tanning) of the insect cuticle, melanization and wing spreading. The polypeptide is Bursicon (burs) (Periplaneta americana (American cockroach)).